A 905-amino-acid polypeptide reads, in one-letter code: DNA-directed RNA polymerase subunit Rpo1N (905 aa).

Zn(2+) is bound by residues C60, C63, C70, H73, C100, C103, C147, and C150. D461, D463, and D465 together coordinate Mg(2+).

This sequence belongs to the RNA polymerase beta' chain family. As to quaternary structure, part of the RNA polymerase complex. Mg(2+) is required as a cofactor. The cofactor is Zn(2+).

Its subcellular location is the cytoplasm. It catalyses the reaction RNA(n) + a ribonucleoside 5'-triphosphate = RNA(n+1) + diphosphate. Functionally, DNA-dependent RNA polymerase (RNAP) catalyzes the transcription of DNA into RNA using the four ribonucleoside triphosphates as substrates. Forms the clamp head domain. In Thermococcus celer, this protein is DNA-directed RNA polymerase subunit Rpo1N.